The following is a 179-amino-acid chain: Large ribosomal subunit protein uL5 (179 aa).

This sequence belongs to the universal ribosomal protein uL5 family. In terms of assembly, part of the 50S ribosomal subunit; part of the 5S rRNA/L5/L18/L25 subcomplex. Contacts the 5S rRNA and the P site tRNA. Forms a bridge to the 30S subunit in the 70S ribosome.

Functionally, this is one of the proteins that bind and probably mediate the attachment of the 5S RNA into the large ribosomal subunit, where it forms part of the central protuberance. In the 70S ribosome it contacts protein S13 of the 30S subunit (bridge B1b), connecting the 2 subunits; this bridge is implicated in subunit movement. Contacts the P site tRNA; the 5S rRNA and some of its associated proteins might help stabilize positioning of ribosome-bound tRNAs. This is Large ribosomal subunit protein uL5 from Bacillus cereus (strain 03BB102).